Reading from the N-terminus, the 376-residue chain is Alanine racemase (376 aa).

The Proton acceptor; specific for D-alanine role is filled by lysine 40. At lysine 40 the chain carries N6-(pyridoxal phosphate)lysine. Arginine 138 contributes to the substrate binding site. Tyrosine 270 acts as the Proton acceptor; specific for L-alanine in catalysis. Methionine 317 contacts substrate.

This sequence belongs to the alanine racemase family. Pyridoxal 5'-phosphate serves as cofactor.

The enzyme catalyses L-alanine = D-alanine. It functions in the pathway amino-acid biosynthesis; D-alanine biosynthesis; D-alanine from L-alanine: step 1/1. In terms of biological role, catalyzes the interconversion of L-alanine and D-alanine. May also act on other amino acids. In Lactobacillus gasseri (strain ATCC 33323 / DSM 20243 / BCRC 14619 / CIP 102991 / JCM 1131 / KCTC 3163 / NCIMB 11718 / NCTC 13722 / AM63), this protein is Alanine racemase (alr).